The primary structure comprises 317 residues: Olfactory receptor 2B11 (317 aa).

The Extracellular segment spans residues 1–29; the sequence is MKSDNHSFLGDSPKAFILLGVSDRPWLEL. An N-linked (GlcNAc...) asparagine glycan is attached at Asn-5. The chain crosses the membrane as a helical span at residues 30–53; it reads PLFVVLLLSYVLAMLGNVAIILAS. Topologically, residues 54-61 are cytoplasmic; sequence RVDPQLHS. The helical transmembrane segment at 62 to 83 threads the bilayer; the sequence is PMYIFLSHLSFLDLCYTTTTVP. Residues 84-104 are Extracellular-facing; that stretch reads QMLVNMGSSQKTISYGGCTVQ. Cys-101 and Cys-193 are joined by a disulfide. The helical transmembrane segment at 105–124 threads the bilayer; sequence YAVFHWLGCTECIVLAAMAL. At 125–143 the chain is on the cytoplasmic side; sequence DRYVAICKPLHYAVLMHRA. Residues 144 to 162 traverse the membrane as a helical segment; it reads LCQQLVALAWLSGFGNSFV. Over 163-199 the chain is Extracellular; the sequence is QVVLTVQLPFCGRQVLNNFFCEVPAVIKLSCADTAVN. The N-linked (GlcNAc...) asparagine glycan is linked to Asn-199. The helical transmembrane segment at 200–223 threads the bilayer; sequence DTILAVLVAFFVLVPLALILLSYG. Topologically, residues 224 to 240 are cytoplasmic; sequence FIARAVLRIQSSKGRHK. A helical transmembrane segment spans residues 241 to 263; sequence AFGTCSSHLMIVSLFYLPAIYMY. Residues 264–276 lie on the Extracellular side of the membrane; the sequence is LQPPSSYSQEQGK. The helical transmembrane segment at 277 to 296 threads the bilayer; that stretch reads FISLFYSIITPTLNPFTYTL. The Cytoplasmic segment spans residues 297–317; that stretch reads RNKDMKGALRRLLARIWRLCG.

It belongs to the G-protein coupled receptor 1 family.

The protein resides in the cell membrane. Odorant receptor. The sequence is that of Olfactory receptor 2B11 (OR2B11) from Homo sapiens (Human).